Reading from the N-terminus, the 1417-residue chain is DNA-directed RNA polymerase subunit beta' (1417 aa).

The Zn(2+) site is built by C68, C70, C83, and C86. Residues D458, D460, and D462 each coordinate Mg(2+). Zn(2+)-binding residues include C811, C884, C891, and C894.

This sequence belongs to the RNA polymerase beta' chain family. As to quaternary structure, the RNAP catalytic core consists of 2 alpha, 1 beta, 1 beta' and 1 omega subunit. When a sigma factor is associated with the core the holoenzyme is formed, which can initiate transcription. The cofactor is Mg(2+). It depends on Zn(2+) as a cofactor.

The enzyme catalyses RNA(n) + a ribonucleoside 5'-triphosphate = RNA(n+1) + diphosphate. Functionally, DNA-dependent RNA polymerase catalyzes the transcription of DNA into RNA using the four ribonucleoside triphosphates as substrates. The protein is DNA-directed RNA polymerase subunit beta' of Francisella tularensis subsp. holarctica (strain OSU18).